A 345-amino-acid chain; its full sequence is Ribosome production factor 1 (345 aa).

Disordered stretches follow at residues 1 to 57 (MAKA…ISEI) and 70 to 105 (WKQQ…PKTI). Residues 87-97 (REREALGDKAP) are compositionally biased toward basic and acidic residues. A Brix domain is found at 142 to 325 (PKILITTSDR…LRSLQKGTFD (184 aa)). Residues 303–320 (VGIQELGPRFTLKLRSLQ) form an RNA-binding region.

Its subcellular location is the nucleus. It is found in the nucleolus. Functionally, may be required for ribosome biogenesis. The sequence is that of Ribosome production factor 1 (Rpf1) from Rattus norvegicus (Rat).